The primary structure comprises 237 residues: BTB/POZ domain-containing protein KCTD6 (237 aa).

Residues 1–104 form an interaction with ANK1 isoform Mu7 region; sequence MDNGDWGYMM…FYQIEPLIQC (104 aa). The segment at 10–110 is interaction with CUL3; sequence MSDPVTLNVG…LIQCLNDPRP (101 aa). The BTB domain maps to 12–81; that stretch reads DPVTLNVGGH…LRTSELTLPL (70 aa). The interval 113–187 is interaction with USP21; sequence PMDTFEEVVE…TFGPCDYHQE (75 aa).

In terms of assembly, homopentamer. Interacts with KCTD11; KCTD6 and KCTD11 may associate in heteropentameric assemblies. Interacts (via BTB domain) with CUL3; initially a 4:4 stoichiometry has been reported, however, electron microscopy revealed pentameric states with a five-pointed pinwheel shape. The interaction with CUL3 is indicative for a participation in a BCR (BTB-CUL3-RBX1) E3 ubiquitin-protein ligase complex. Interacts with HDAC1; probably indirect as the interaction requires the presence of KCTD11. Interacts with USP21 (preferentially catalytic inactive form). Interacts with ANK1 isoform Mu7; detected in striated muscle. Interacts with USP11. Highly expressed in cerebellum and brain.

The protein resides in the cytoplasm. The protein localises to the myofibril. Its subcellular location is the sarcomere. It is found in the m line. Its pathway is protein modification; protein ubiquitination. Functionally, probable substrate-specific adapter of a BCR (BTB-CUL3-RBX1) E3 ubiquitin-protein ligase complex mediating the ubiquitination and subsequent proteasomal degradation of target proteins. Promotes the ubiquitination of HDAC1; the function seems to depend on KCTD11:KCTD6 oligomerization. Can function as antagonist of the Hedgehog pathway by affecting the nuclear transfer of transcription factor GLI1; the function probably occurs via HDAC1 down-regulation, keeping GLI1 acetylated and inactive. Inhibits cell growth and tumorigenicity of medulloblastoma (MDB). Involved in regulating protein levels of ANK1 isoform Mu7 probably implicating CUL3-dependent proteasomal degradation. The protein is BTB/POZ domain-containing protein KCTD6 (Kctd6) of Mus musculus (Mouse).